We begin with the raw amino-acid sequence, 295 residues long: Aspartate carbamoyltransferase catalytic subunit (295 aa).

R49 and T50 together coordinate carbamoyl phosphate. K77 contributes to the L-aspartate binding site. Residues R99, H127, and Q130 each contribute to the carbamoyl phosphate site. Residues R161 and R212 each coordinate L-aspartate. Carbamoyl phosphate contacts are provided by G251 and P252.

Belongs to the aspartate/ornithine carbamoyltransferase superfamily. ATCase family. Heterododecamer (2C3:3R2) of six catalytic PyrB chains organized as two trimers (C3), and six regulatory PyrI chains organized as three dimers (R2).

It catalyses the reaction carbamoyl phosphate + L-aspartate = N-carbamoyl-L-aspartate + phosphate + H(+). The protein operates within pyrimidine metabolism; UMP biosynthesis via de novo pathway; (S)-dihydroorotate from bicarbonate: step 2/3. Catalyzes the condensation of carbamoyl phosphate and aspartate to form carbamoyl aspartate and inorganic phosphate, the committed step in the de novo pyrimidine nucleotide biosynthesis pathway. In Campylobacter jejuni subsp. jejuni serotype O:6 (strain 81116 / NCTC 11828), this protein is Aspartate carbamoyltransferase catalytic subunit.